We begin with the raw amino-acid sequence, 360 residues long: Aminomethyltransferase (360 aa).

Belongs to the GcvT family. As to quaternary structure, the glycine cleavage system is composed of four proteins: P, T, L and H.

The catalysed reaction is N(6)-[(R)-S(8)-aminomethyldihydrolipoyl]-L-lysyl-[protein] + (6S)-5,6,7,8-tetrahydrofolate = N(6)-[(R)-dihydrolipoyl]-L-lysyl-[protein] + (6R)-5,10-methylene-5,6,7,8-tetrahydrofolate + NH4(+). Its function is as follows. The glycine cleavage system catalyzes the degradation of glycine. The protein is Aminomethyltransferase of Pseudoalteromonas translucida (strain TAC 125).